The primary structure comprises 310 residues: Nucleotide-binding protein Ddes_0972 (310 aa).

ATP is bound at residue 30 to 37; the sequence is GLSGAGKS. 82–85 contacts GTP; it reads DLRQ.

It belongs to the RapZ-like family.

Displays ATPase and GTPase activities. The sequence is that of Nucleotide-binding protein Ddes_0972 from Desulfovibrio desulfuricans (strain ATCC 27774 / DSM 6949 / MB).